The sequence spans 444 residues: tRNA (guanine-N(7)-)-methyltransferase non-catalytic subunit TRM82 (444 aa).

7 WD repeats span residues 1 to 47 (MSVI…WSDD), 48 to 99 (FDKI…LGAP), 100 to 147 (PIYS…KRFC), 148 to 192 (FSKR…EPIL), 193 to 237 (GHVS…DKWL), 238 to 279 (FGHK…STFD), and 308 to 354 (FAVS…ITFP). The disordered stretch occupies residues 55 to 92 (RNTTAKEQQGQSSENENENKKLKSNKGDSIKRTAAKVP). The span at 71-85 (NENKKLKSNKGDSIK) shows a compositional bias: basic and acidic residues. Ser-93 is subject to Phosphoserine.

This sequence belongs to the WD repeat TRM82 family. As to quaternary structure, forms a heterodimer with the catalytic subunit TRM8.

The protein resides in the nucleus. Its pathway is tRNA modification; N(7)-methylguanine-tRNA biosynthesis. In terms of biological role, required for the formation of N(7)-methylguanine at position 46 (m7G46) in tRNA, a modification required to maintain stability of tRNAs; its absence resulting in tRNA decay. In the complex, it is required to stabilize and induce conformational changes of the catalytic subunit. This chain is tRNA (guanine-N(7)-)-methyltransferase non-catalytic subunit TRM82, found in Saccharomyces cerevisiae (strain RM11-1a) (Baker's yeast).